We begin with the raw amino-acid sequence, 512 residues long: Maturase K (512 aa).

This sequence belongs to the intron maturase 2 family. MatK subfamily.

The protein resides in the plastid. It is found in the chloroplast. In terms of biological role, usually encoded in the trnK tRNA gene intron. Probably assists in splicing its own and other chloroplast group II introns. The sequence is that of Maturase K from Oenothera argillicola (Appalachian evening primrose).